The primary structure comprises 405 residues: Histone deacetylase clr6 (405 aa).

The segment at 6–318 (KKVSYFYDED…WTYETGLLAG (313 aa)) is histone deacetylase. Histidine 138 is an active-site residue.

This sequence belongs to the histone deacetylase family. HD type 1 subfamily. Heterotetramer of alp13, clr6, prw1 and pst2.

The protein resides in the nucleus. The enzyme catalyses N(6)-acetyl-L-lysyl-[histone] + H2O = L-lysyl-[histone] + acetate. Functionally, responsible for the deacetylation of lysine residues on the N-terminal part of the core histones (H2A, H2B, H3 and H4). Histone deacetylation gives a tag for epigenetic repression and plays an important role in transcriptional regulation, cell cycle progression and developmental events. Histone deacetylases act via the formation of large multiprotein complexes. Has a role in chromatin assembly and chromosome segregation. In Schizosaccharomyces pombe (strain 972 / ATCC 24843) (Fission yeast), this protein is Histone deacetylase clr6 (clr6).